The chain runs to 79 residues: U-actitoxin-Avd8b (79 aa).

An N-terminal signal peptide occupies residues 1 to 19 (MKSLVIVFVVLLGVAMISA). A propeptide spanning residues 20–36 (NEEELLAILQDQRNDAR) is cleaved from the precursor.

The protein belongs to the sea anemone 8 toxin family.

The protein resides in the secreted. The protein localises to the nematocyst. This Anemonia viridis (Snakelocks anemone) protein is U-actitoxin-Avd8b.